Reading from the N-terminus, the 332-residue chain is Anthranilate phosphoribosyltransferase (332 aa).

5-phospho-alpha-D-ribose 1-diphosphate contacts are provided by residues Gly-79, 82–83, Ser-87, 89–92, 107–115, and Ser-119; these read GD, NIST, and KHGNRSVSS. Position 79 (Gly-79) interacts with anthranilate. Ser-91 serves as a coordination point for Mg(2+). Asn-110 contributes to the anthranilate binding site. Arg-165 is a binding site for anthranilate. Residues Asp-223 and Glu-224 each coordinate Mg(2+).

This sequence belongs to the anthranilate phosphoribosyltransferase family. As to quaternary structure, homodimer. The cofactor is Mg(2+).

The catalysed reaction is N-(5-phospho-beta-D-ribosyl)anthranilate + diphosphate = 5-phospho-alpha-D-ribose 1-diphosphate + anthranilate. The protein operates within amino-acid biosynthesis; L-tryptophan biosynthesis; L-tryptophan from chorismate: step 2/5. Catalyzes the transfer of the phosphoribosyl group of 5-phosphorylribose-1-pyrophosphate (PRPP) to anthranilate to yield N-(5'-phosphoribosyl)-anthranilate (PRA). The chain is Anthranilate phosphoribosyltransferase from Serratia proteamaculans (strain 568).